A 737-amino-acid chain; its full sequence is Catalase-peroxidase (737 aa).

The segment at 1 to 33 is disordered; it reads MPEATEHPPIGEAQTEPAQSGCPMVIKPPVEGG. Residues 107 to 235 constitute a cross-link (tryptophyl-tyrosyl-methioninium (Trp-Tyr) (with M-261)); sequence WHAAGTYRVQ…LGASHMGLIY (129 aa). H108 acts as the Proton acceptor in catalysis. Residues 235–261 constitute a cross-link (tryptophyl-tyrosyl-methioninium (Tyr-Met) (with W-107)); sequence YVNPEGPEGNPDPIAAAIDIRETFGRM. Residue H276 participates in heme binding.

Belongs to the peroxidase family. Peroxidase/catalase subfamily. As to quaternary structure, homodimer or homotetramer. The cofactor is heme b. In terms of processing, formation of the three residue Trp-Tyr-Met cross-link is important for the catalase, but not the peroxidase activity of the enzyme.

It catalyses the reaction H2O2 + AH2 = A + 2 H2O. The enzyme catalyses 2 H2O2 = O2 + 2 H2O. Functionally, bifunctional enzyme with both catalase and broad-spectrum peroxidase activity. May play a role in polycyclic aromatic hydrocarbon (PAH) metabolism. The chain is Catalase-peroxidase from Mycolicibacterium vanbaalenii (Mycobacterium vanbaalenii).